The chain runs to 332 residues: Fructose-1,6-bisphosphatase class 1 (332 aa).

Mg(2+) is bound by residues Glu89, Asp110, Leu112, and Asp113. Residues 113 to 116 (DGSS), Asn206, Tyr239, 257 to 259 (YLY), and Lys269 each bind substrate. Glu275 contacts Mg(2+).

Belongs to the FBPase class 1 family. Homotetramer. Mg(2+) serves as cofactor.

The protein localises to the cytoplasm. The catalysed reaction is beta-D-fructose 1,6-bisphosphate + H2O = beta-D-fructose 6-phosphate + phosphate. Its pathway is carbohydrate biosynthesis; gluconeogenesis. This is Fructose-1,6-bisphosphatase class 1 from Salmonella gallinarum (strain 287/91 / NCTC 13346).